We begin with the raw amino-acid sequence, 242 residues long: MNQVARGAGAKRYADAKAALAGVVADGQTLAVGGFGLCGIPEALITALRDSAVSGLTVISNNAGVDGFGLGQLLATRQIRKMISSYVGENKEFERQYLAGELELEFNPQGTLAERLRAGGAGIPAFYTATGYGTIVADGKETREFDGKHYVLETALQADVALIKAWRADTAGNLVFRKTARNFNPACAMAGRICIAEVEEIVELGAIDPDQVHLPGIYVDRLVLNATPEKRIEQRTVRQGDK.

33–39 (GGFGLCG) contacts CoA.

Belongs to the 3-oxoacid CoA-transferase subunit A family. In terms of assembly, heterodimer of a subunit A and a subunit B.

The catalysed reaction is a 3-oxo acid + succinyl-CoA = a 3-oxoacyl-CoA + succinate. Its pathway is bacterial outer membrane biogenesis; lipopolysaccharide biosynthesis. This is Succinyl-CoA:3-ketoacid coenzyme A transferase subunit A (lpsI) from Xanthomonas campestris pv. campestris (strain B100).